The primary structure comprises 27 residues: Protein YqfI (27 aa).

The sequence is that of Protein YqfI from Escherichia coli (strain K12).